The chain runs to 453 residues: Bifunctional protein GlmU (453 aa).

The segment at 1–226 is pyrophosphorylase; it reads MKFSAVILAA…PIEVEGVNDR (226 aa). Residues 8–11, Lys-22, Gln-73, 78–79, 100–102, Gly-137, Glu-151, Asn-166, and Asn-224 each bind UDP-N-acetyl-alpha-D-glucosamine; these read LAAG, GT, and YGD. A Mg(2+)-binding site is contributed by Asp-102. Asn-224 serves as a coordination point for Mg(2+). A linker region spans residues 227–247; sequence AQLARLERAFQAAQAKKLLEQ. The tract at residues 248 to 453 is N-acetyltransferase; it reads GVMLRDPARF…TGWQRPVKKK (206 aa). UDP-N-acetyl-alpha-D-glucosamine-binding residues include Arg-330 and Lys-348. His-360 serves as the catalytic Proton acceptor. UDP-N-acetyl-alpha-D-glucosamine is bound by residues Tyr-363 and Asn-374. Acetyl-CoA contacts are provided by residues Ala-377, 383–384, Ser-402, Ala-420, and Arg-437; that span reads NY.

In the N-terminal section; belongs to the N-acetylglucosamine-1-phosphate uridyltransferase family. The protein in the C-terminal section; belongs to the transferase hexapeptide repeat family. Homotrimer. Mg(2+) serves as cofactor.

It localises to the cytoplasm. It catalyses the reaction alpha-D-glucosamine 1-phosphate + acetyl-CoA = N-acetyl-alpha-D-glucosamine 1-phosphate + CoA + H(+). It carries out the reaction N-acetyl-alpha-D-glucosamine 1-phosphate + UTP + H(+) = UDP-N-acetyl-alpha-D-glucosamine + diphosphate. It participates in nucleotide-sugar biosynthesis; UDP-N-acetyl-alpha-D-glucosamine biosynthesis; N-acetyl-alpha-D-glucosamine 1-phosphate from alpha-D-glucosamine 6-phosphate (route II): step 2/2. Its pathway is nucleotide-sugar biosynthesis; UDP-N-acetyl-alpha-D-glucosamine biosynthesis; UDP-N-acetyl-alpha-D-glucosamine from N-acetyl-alpha-D-glucosamine 1-phosphate: step 1/1. The protein operates within bacterial outer membrane biogenesis; LPS lipid A biosynthesis. In terms of biological role, catalyzes the last two sequential reactions in the de novo biosynthetic pathway for UDP-N-acetylglucosamine (UDP-GlcNAc). The C-terminal domain catalyzes the transfer of acetyl group from acetyl coenzyme A to glucosamine-1-phosphate (GlcN-1-P) to produce N-acetylglucosamine-1-phosphate (GlcNAc-1-P), which is converted into UDP-GlcNAc by the transfer of uridine 5-monophosphate (from uridine 5-triphosphate), a reaction catalyzed by the N-terminal domain. The chain is Bifunctional protein GlmU from Vibrio vulnificus (strain YJ016).